The sequence spans 237 residues: ATP-dependent dethiobiotin synthetase BioD (237 aa).

21 to 26 is an ATP binding site; the sequence is GVGKTV. T25 serves as a coordination point for Mg(2+). K48 is an active-site residue. A substrate-binding site is contributed by T52. ATP-binding positions include D56, 117–120, 177–178, and 209–211; these read EALG, SC, and PYL. Residues D56 and E117 each contribute to the Mg(2+) site.

It belongs to the dethiobiotin synthetase family. As to quaternary structure, homodimer. Mg(2+) is required as a cofactor.

Its subcellular location is the cytoplasm. The enzyme catalyses (7R,8S)-7,8-diammoniononanoate + CO2 + ATP = (4R,5S)-dethiobiotin + ADP + phosphate + 3 H(+). It catalyses the reaction (7R,8S)-8-amino-7-(carboxyamino)nonanoate + ATP = (4R,5S)-dethiobiotin + ADP + phosphate + H(+). Its pathway is cofactor biosynthesis; biotin biosynthesis; biotin from 7,8-diaminononanoate: step 1/2. Its function is as follows. Catalyzes a mechanistically unusual reaction, the ATP-dependent insertion of CO2 between the N7 and N8 nitrogen atoms of 7,8-diaminopelargonic acid (DAPA, also called 7,8-diammoniononanoate) to form a ureido ring. This cyanobacterium does not encode bioA (which catalyzes the formation of the precursor for this reaction in the cannonical pathway), instead it encodes bioU, which replaces bioA and also performs the first half of the cannonical BioD reaction. Thus in this bacteria BioD has a different substrate. In Synechocystis replacement of bioU by bioA from E.coli leads to biotin synthesis, showing BioD can use the 'cannonical' 7,8-diammoniononanoate as a substrate. In Synechocystis sp. (strain ATCC 27184 / PCC 6803 / Kazusa), this protein is ATP-dependent dethiobiotin synthetase BioD.